Reading from the N-terminus, the 348-residue chain is Beta-hexosaminidase (348 aa).

Residues D64, R72, R138, and K168–H169 each bind substrate. The active-site Proton donor/acceptor is the H181. D252 (nucleophile) is an active-site residue.

The protein belongs to the glycosyl hydrolase 3 family. NagZ subfamily.

The protein localises to the cytoplasm. The catalysed reaction is Hydrolysis of terminal non-reducing N-acetyl-D-hexosamine residues in N-acetyl-beta-D-hexosaminides.. The protein operates within cell wall biogenesis; peptidoglycan recycling. Plays a role in peptidoglycan recycling by cleaving the terminal beta-1,4-linked N-acetylglucosamine (GlcNAc) from peptide-linked peptidoglycan fragments, giving rise to free GlcNAc, anhydro-N-acetylmuramic acid and anhydro-N-acetylmuramic acid-linked peptides. The sequence is that of Beta-hexosaminidase from Alkalilimnicola ehrlichii (strain ATCC BAA-1101 / DSM 17681 / MLHE-1).